The sequence spans 229 residues: Heptaprenylglyceryl phosphate synthase (229 aa).

K12 lines the sn-glycerol 1-phosphate pocket. Mg(2+) contacts are provided by D14 and T40. Sn-glycerol 1-phosphate contacts are provided by residues 159–164 (YIEYSG), G189, and 209–210 (GN).

The protein belongs to the GGGP/HepGP synthase family. Group I subfamily. In terms of assembly, homodimer. It depends on Mg(2+) as a cofactor.

The enzyme catalyses sn-glycerol 1-phosphate + all-trans-heptaprenyl diphosphate = 3-heptaprenyl-sn-glycero-1-phosphate + diphosphate. It functions in the pathway membrane lipid metabolism; glycerophospholipid metabolism. Prenyltransferase that catalyzes in vivo the transfer of the heptaprenyl moiety of heptaprenyl pyrophosphate (HepPP; 35 carbon atoms) to the C3 hydroxyl of sn-glycerol-1-phosphate (G1P), producing heptaprenylglyceryl phosphate (HepGP). This reaction is an ether-bond-formation step in the biosynthesis of archaea-type G1P-based membrane lipids found in Bacillales. The chain is Heptaprenylglyceryl phosphate synthase from Oceanobacillus iheyensis (strain DSM 14371 / CIP 107618 / JCM 11309 / KCTC 3954 / HTE831).